The chain runs to 84 residues: Large ribosomal subunit protein bL27 (84 aa).

Residues 1–21 (MAHKKGQGSTRNGRDSHSKRL) are disordered. The segment covering 12 to 21 (NGRDSHSKRL) has biased composition (basic and acidic residues).

This sequence belongs to the bacterial ribosomal protein bL27 family.

This Methylacidiphilum infernorum (isolate V4) (Methylokorus infernorum (strain V4)) protein is Large ribosomal subunit protein bL27.